A 192-amino-acid polypeptide reads, in one-letter code: Ion-translocating oxidoreductase complex subunit B (192 aa).

The tract at residues 1–26 (MSAVWIAVIAISLLGLIFGLILGYAS) is hydrophobic. The 4Fe-4S domain maps to 32–91 (QDDPVVEKIDELLPQSQCGQCGYPGCRPYAEAVGAQGEKINRCAPGGEAVMLKIAALLNV). 12 residues coordinate [4Fe-4S] cluster: Cys-49, Cys-52, Cys-57, Cys-74, Cys-117, Cys-120, Cys-123, Cys-127, Cys-147, Cys-150, Cys-153, and Cys-157. 4Fe-4S ferredoxin-type domains follow at residues 108–137 (MLAV…GATR) and 138–167 (AMHT…LVPV).

It belongs to the 4Fe4S bacterial-type ferredoxin family. RnfB subfamily. In terms of assembly, the complex is composed of six subunits: RnfA, RnfB, RnfC, RnfD, RnfE and RnfG. The cofactor is [4Fe-4S] cluster.

The protein localises to the cell inner membrane. Functionally, part of a membrane-bound complex that couples electron transfer with translocation of ions across the membrane. The protein is Ion-translocating oxidoreductase complex subunit B of Klebsiella pneumoniae (strain 342).